A 147-amino-acid chain; its full sequence is Monothiol glutaredoxin-S5 (147 aa).

A Glutaredoxin domain is found at A49–W146. C69 contributes to the [2Fe-2S] cluster binding site. Positions A144–L147 match the Responsive for interaction with TGA factors motif.

It belongs to the glutaredoxin family. CC-type subfamily.

It localises to the cytoplasm. The protein resides in the nucleus. Functionally, may only reduce GSH-thiol disulfides, but not protein disulfides. The protein is Monothiol glutaredoxin-S5 (GRXS5) of Oryza sativa subsp. japonica (Rice).